Here is a 504-residue protein sequence, read N- to C-terminus: Probable alpha-L-arabinofuranosidase C (504 aa).

N-linked (GlcNAc...) asparagine glycosylation is found at asparagine 152, asparagine 181, and asparagine 269.

It belongs to the glycosyl hydrolase 51 family.

Its subcellular location is the secreted. The catalysed reaction is Hydrolysis of terminal non-reducing alpha-L-arabinofuranoside residues in alpha-L-arabinosides.. It participates in glycan metabolism; L-arabinan degradation. Its function is as follows. Alpha-L-arabinofuranosidase involved in the degradation of arabinoxylan, a major component of plant hemicellulose. Acts only on small linear 1,5-alpha-linked L-arabinofuranosyl oligosaccharides. The polypeptide is Probable alpha-L-arabinofuranosidase C (abfC) (Aspergillus flavus (strain ATCC 200026 / FGSC A1120 / IAM 13836 / NRRL 3357 / JCM 12722 / SRRC 167)).